The following is a 262-amino-acid chain: Acyl-[acyl-carrier-protein]--UDP-N-acetylglucosamine O-acyltransferase (262 aa).

Belongs to the transferase hexapeptide repeat family. LpxA subfamily. In terms of assembly, homotrimer.

The protein localises to the cytoplasm. It carries out the reaction a (3R)-hydroxyacyl-[ACP] + UDP-N-acetyl-alpha-D-glucosamine = a UDP-3-O-[(3R)-3-hydroxyacyl]-N-acetyl-alpha-D-glucosamine + holo-[ACP]. Its pathway is glycolipid biosynthesis; lipid IV(A) biosynthesis; lipid IV(A) from (3R)-3-hydroxytetradecanoyl-[acyl-carrier-protein] and UDP-N-acetyl-alpha-D-glucosamine: step 1/6. In terms of biological role, involved in the biosynthesis of lipid A, a phosphorylated glycolipid that anchors the lipopolysaccharide to the outer membrane of the cell. This is Acyl-[acyl-carrier-protein]--UDP-N-acetylglucosamine O-acyltransferase from Psychromonas ingrahamii (strain DSM 17664 / CCUG 51855 / 37).